The sequence spans 607 residues: Matrix metalloproteinase-16 (607 aa).

The N-terminal stretch at 1–31 (MILLAFSSGRRLDFVHRSGVFFFQTLLWILC) is a signal peptide. Positions 32-119 (ATVCGTEQYF…SSKFNIRRKR (88 aa)) are excised as a propeptide. An N-linked (GlcNAc...) asparagine glycan is attached at N83. Residues 99–106 (PRCGVPDQ) carry the Cysteine switch motif. C101 contributes to the Zn(2+) binding site. Residues 120-564 (YALTGQKWQH…LDNTASTVKA (445 aa)) lie on the Extracellular side of the membrane. D183 provides a ligand contact to Ca(2+). The Zn(2+) site is built by H193 and D195. Residues D200, G201, G203, and F205 each coordinate Ca(2+). H208 serves as a coordination point for Zn(2+). Residues G215, G217, and D219 each coordinate Ca(2+). H221 provides a ligand contact to Zn(2+). Ca(2+)-binding residues include D223 and E226. H246 lines the Zn(2+) pocket. The active site involves E247. 2 residues coordinate Zn(2+): H250 and H256. Residues 281–340 (DDLQGIQKIYGPPDKIPPPTRPLPTVPPHRSVPPADPRKNDRPKPPRPPTGRPSYPGAKP) form a disordered region. A compositionally biased stretch (pro residues) spans 294-315 (DKIPPPTRPLPTVPPHRSVPPA). Hemopexin repeat units follow at residues 340-388 (PNIC…WRGL), 389-434 (PPSI…GNGI), 436-484 (PHGI…KGIP), and 485-532 (ESPQ…FMGC). C343 and C532 form a disulfide bridge. Residues 565 to 585 (IAIVIPCILALCLLVLVYTVF) form a helical membrane-spanning segment. Topologically, residues 586-607 (QFKRKGTPRHILYCKRSMQEWV) are cytoplasmic.

This sequence belongs to the peptidase M10A family. In terms of assembly, interacts with CSPG4 through CSPG4 chondroitin sulfate glycosaminoglycan. It depends on Zn(2+) as a cofactor. Requires Ca(2+) as cofactor. In terms of processing, the precursor is cleaved by a furin endopeptidase. Strongly expressed in the lung, brain and smooth muscle cells. Weakly detectable in the spleen and liver and indetectable in the heart, skeletal muscle and kidney.

The protein localises to the cell membrane. It is found in the secreted. Its subcellular location is the extracellular space. The protein resides in the extracellular matrix. Endopeptidase that degrades various components of the extracellular matrix, such as collagen type III and fibronectin. Activates progelatinase A. Involved in the matrix remodeling of blood vessels. The short isoform efficiently converts progelatinase A to the intermediate form but not to the mature one. It has no effect on type I, II, IV and V collagen. However, upon interaction with CSPG4, it may be involved in degradation and invasion of type I collagen by melanoma cells. This is Matrix metalloproteinase-16 (Mmp16) from Rattus norvegicus (Rat).